Reading from the N-terminus, the 144-residue chain is Transcription antitermination protein NusB (144 aa).

The protein belongs to the NusB family.

Its function is as follows. Involved in transcription antitermination. Required for transcription of ribosomal RNA (rRNA) genes. Binds specifically to the boxA antiterminator sequence of the ribosomal RNA (rrn) operons. This chain is Transcription antitermination protein NusB, found in Streptococcus thermophilus (strain CNRZ 1066).